Consider the following 264-residue polypeptide: Thymidylate synthase (264 aa).

DUMP is bound at residue arginine 21. Histidine 51 contributes to the (6R)-5,10-methylene-5,6,7,8-tetrahydrofolate binding site. Position 126-127 (126-127 (RR)) interacts with dUMP. Cysteine 146 acts as the Nucleophile in catalysis. DUMP contacts are provided by residues 166–169 (RSCD), asparagine 177, and 207–209 (HLY). Aspartate 169 serves as a coordination point for (6R)-5,10-methylene-5,6,7,8-tetrahydrofolate. A (6R)-5,10-methylene-5,6,7,8-tetrahydrofolate-binding site is contributed by serine 263.

It belongs to the thymidylate synthase family. Bacterial-type ThyA subfamily. In terms of assembly, homodimer.

Its subcellular location is the cytoplasm. The enzyme catalyses dUMP + (6R)-5,10-methylene-5,6,7,8-tetrahydrofolate = 7,8-dihydrofolate + dTMP. It functions in the pathway pyrimidine metabolism; dTTP biosynthesis. Catalyzes the reductive methylation of 2'-deoxyuridine-5'-monophosphate (dUMP) to 2'-deoxythymidine-5'-monophosphate (dTMP) while utilizing 5,10-methylenetetrahydrofolate (mTHF) as the methyl donor and reductant in the reaction, yielding dihydrofolate (DHF) as a by-product. This enzymatic reaction provides an intracellular de novo source of dTMP, an essential precursor for DNA biosynthesis. In Wigglesworthia glossinidia brevipalpis, this protein is Thymidylate synthase.